A 72-amino-acid chain; its full sequence is Small ribosomal subunit protein bS18c (72 aa).

Belongs to the bacterial ribosomal protein bS18 family. In terms of assembly, part of the 30S ribosomal subunit.

It is found in the plastid. Its subcellular location is the chloroplast. The polypeptide is Small ribosomal subunit protein bS18c (Thalassiosira pseudonana (Marine diatom)).